The chain runs to 164 residues: MKVILREDFINLGKEGDIVDVKDGFARNYLLPKGFAVFSNKHNIDIFSQKKRAILKRQESRRKMAVELKEKLDKVNLEFIMQSNDSGKLFHSINSSNIADELLKLGFEIERRKIDMHHGALKAFGTYNVIIKLYEGISSVITVEIKREEKKNSLKKSKSVKKEV.

The protein belongs to the bacterial ribosomal protein bL9 family.

In terms of biological role, binds to the 23S rRNA. The polypeptide is Large ribosomal subunit protein bL9 (Borrelia recurrentis (strain A1)).